The sequence spans 427 residues: MSTNAELFDRACRSIPGGVNSPVRAFRSVGGTPRFIQRAQGPYVWDAEGKQYIDYVGSWGPAILGHAHPEVVRAVQEAAVHGLSFGAPTEAEVELAEMLIARLPSLEQVRLVSSGTEATMTAIRLARGATGRHKIIKFEGCYHGHSDSLLVKAGSGLLTFGNPSSAGVPPEFVAHTLPLEFNNLAAVDAAFSQHGAEIACVIVEPVAGNMNLIKPAEGFLAGLRELCTRHGAVLIFDEVMTGFRVGPQGVQGLTGVRPDLTTLAKVIGGGMPVGAFGGRADLMAHITPLGGVYQAGTLSGNPVAVAAGLATMRLIGEPGFYERLSAQTARLAQGLQERARAAGVPFSADAIGGMFGLYFGDRVPASFAEVSACDTEAFKRFFHAMLERGIHFAPSAFEAGFVSATHDDAVIDATLEAAEQVFATLRA.

N6-(pyridoxal phosphate)lysine is present on K265.

Belongs to the class-III pyridoxal-phosphate-dependent aminotransferase family. HemL subfamily. Homodimer. Pyridoxal 5'-phosphate serves as cofactor.

The protein resides in the cytoplasm. The catalysed reaction is (S)-4-amino-5-oxopentanoate = 5-aminolevulinate. Its pathway is porphyrin-containing compound metabolism; protoporphyrin-IX biosynthesis; 5-aminolevulinate from L-glutamyl-tRNA(Glu): step 2/2. This is Glutamate-1-semialdehyde 2,1-aminomutase from Bordetella parapertussis (strain 12822 / ATCC BAA-587 / NCTC 13253).